The chain runs to 74 residues: ATP synthase subunit c (74 aa).

A run of 2 helical transmembrane segments spans residues 8-28 (FIGI…VSNI) and 52-72 (IGAG…MLLI).

Belongs to the ATPase C chain family. In terms of assembly, F-type ATPases have 2 components, F(1) - the catalytic core - and F(0) - the membrane proton channel. F(1) has five subunits: alpha(3), beta(3), gamma(1), delta(1), epsilon(1). F(0) has three main subunits: a(1), b(2) and c(10-14). The alpha and beta chains form an alternating ring which encloses part of the gamma chain. F(1) is attached to F(0) by a central stalk formed by the gamma and epsilon chains, while a peripheral stalk is formed by the delta and b chains.

It is found in the cell inner membrane. Functionally, f(1)F(0) ATP synthase produces ATP from ADP in the presence of a proton or sodium gradient. F-type ATPases consist of two structural domains, F(1) containing the extramembraneous catalytic core and F(0) containing the membrane proton channel, linked together by a central stalk and a peripheral stalk. During catalysis, ATP synthesis in the catalytic domain of F(1) is coupled via a rotary mechanism of the central stalk subunits to proton translocation. Key component of the F(0) channel; it plays a direct role in translocation across the membrane. A homomeric c-ring of between 10-14 subunits forms the central stalk rotor element with the F(1) delta and epsilon subunits. This chain is ATP synthase subunit c, found in Rickettsia prowazekii (strain Madrid E).